The primary structure comprises 347 residues: NADH-ubiquinone oxidoreductase chain 2 (347 aa).

The next 11 helical transmembrane spans lie at 3-23 (PIIF…VMIS), 25-45 (HWLR…PIMM), 66-86 (ASML…QWTV), 96-116 (MLMT…FWVP), 122-142 (IPLS…MSVL), 145-165 (ILPS…IMIG), 178-198 (IMAY…PYNP), 200-220 (MMLL…LLFM), 237-257 (MPIM…LPPL), 274-294 (NSII…YFYM), and 325-345 (LLPT…ILSI).

Belongs to the complex I subunit 2 family. In terms of assembly, core subunit of respiratory chain NADH dehydrogenase (Complex I) which is composed of 45 different subunits. Interacts with TMEM242.

Its subcellular location is the mitochondrion inner membrane. The catalysed reaction is a ubiquinone + NADH + 5 H(+)(in) = a ubiquinol + NAD(+) + 4 H(+)(out). In terms of biological role, core subunit of the mitochondrial membrane respiratory chain NADH dehydrogenase (Complex I) which catalyzes electron transfer from NADH through the respiratory chain, using ubiquinone as an electron acceptor. Essential for the catalytic activity and assembly of complex I. The polypeptide is NADH-ubiquinone oxidoreductase chain 2 (Capra hircus (Goat)).